Here is a 430-residue protein sequence, read N- to C-terminus: UDP-N-acetylglucosamine 1-carboxyvinyltransferase (430 aa).

22 to 23 contacts phosphoenolpyruvate; it reads KN. Arg-102 is a binding site for UDP-N-acetyl-alpha-D-glucosamine. Cys-126 functions as the Proton donor in the catalytic mechanism. The residue at position 126 (Cys-126) is a 2-(S-cysteinyl)pyruvic acid O-phosphothioketal. UDP-N-acetyl-alpha-D-glucosamine contacts are provided by residues 131-135, 172-175, Asp-317, and Ile-339; these read RPVDL and KVSV.

The protein belongs to the EPSP synthase family. MurA subfamily.

It localises to the cytoplasm. It catalyses the reaction phosphoenolpyruvate + UDP-N-acetyl-alpha-D-glucosamine = UDP-N-acetyl-3-O-(1-carboxyvinyl)-alpha-D-glucosamine + phosphate. It functions in the pathway cell wall biogenesis; peptidoglycan biosynthesis. Cell wall formation. Adds enolpyruvyl to UDP-N-acetylglucosamine. The sequence is that of UDP-N-acetylglucosamine 1-carboxyvinyltransferase from Rhizobium meliloti (strain 1021) (Ensifer meliloti).